We begin with the raw amino-acid sequence, 233 residues long: Leucyl/phenylalanyl-tRNA--protein transferase (233 aa).

The protein belongs to the L/F-transferase family.

Its subcellular location is the cytoplasm. It carries out the reaction N-terminal L-lysyl-[protein] + L-leucyl-tRNA(Leu) = N-terminal L-leucyl-L-lysyl-[protein] + tRNA(Leu) + H(+). The catalysed reaction is N-terminal L-arginyl-[protein] + L-leucyl-tRNA(Leu) = N-terminal L-leucyl-L-arginyl-[protein] + tRNA(Leu) + H(+). The enzyme catalyses L-phenylalanyl-tRNA(Phe) + an N-terminal L-alpha-aminoacyl-[protein] = an N-terminal L-phenylalanyl-L-alpha-aminoacyl-[protein] + tRNA(Phe). In terms of biological role, functions in the N-end rule pathway of protein degradation where it conjugates Leu, Phe and, less efficiently, Met from aminoacyl-tRNAs to the N-termini of proteins containing an N-terminal arginine or lysine. The polypeptide is Leucyl/phenylalanyl-tRNA--protein transferase (Anaeromyxobacter dehalogenans (strain 2CP-C)).